The chain runs to 1032 residues: Unconventional myosin-Ih (1032 aa).

Residues 12 to 701 form the Myosin motor domain; that stretch reads GVQDFVLLDA…TLFATEDAFE (690 aa). 105–112 is a binding site for ATP; that stretch reads GESGAGKT. Phosphoserine is present on Ser-365. Residues 578–600 form an actin-binding region; it reads LSSLLETLISKEPSYIRCIKPND. IQ domains are found at residues 704-726 and 727-756; these read KHQL…EYVK and KRQA…AVRI. The TH1 domain maps to 855–1029; sequence KDGYTESLNQ…NGQLTVVSVR (175 aa).

This sequence belongs to the TRAFAC class myosin-kinesin ATPase superfamily. Myosin family.

In terms of biological role, myosins are actin-based motor molecules with ATPase activity. Unconventional myosins serve in intracellular movements. Their highly divergent tails are presumed to bind to membranous compartments, which would be moved relative to actin filaments. The chain is Unconventional myosin-Ih (MYO1H) from Homo sapiens (Human).